Here is a 275-residue protein sequence, read N- to C-terminus: MSVWTSRKAAEDNDTSLSSGIRAGLQKAVVTLHPEWVRVLQDDSVTLRCQGTYPPGDNSTKWFHNGSLTLQQDANYLIGSAKVKDSGEYTCQTALSMLSDPVNLEVHIGWLLLQTTQRPVFREGDPIRLNCHSWRNTPVYKVTYLQNGKGKKYFHKNSELHIPNATQNHSGSYFCRGIIGRNNKSSETLRITVGDLTSPSTFPPWHQITFCLLIGLLFTIDTVMYFSVQKGLRRSTADYEEPEVHWSKEPENKTISEEKQSFRSSRANSETPENR.

The N-terminal stretch at 1 to 23 (MSVWTSRKAAEDNDTSLSSGIRA) is a signal peptide. The Extracellular segment spans residues 24-207 (GLQKAVVTLH…SPSTFPPWHQ (184 aa)). Ig-like C2-type domains lie at 28–92 (AVVT…YTCQ) and 101–192 (PVNL…LRIT). Cystine bridges form between C49–C91 and C131–C175. N-linked (GlcNAc...) asparagine glycosylation is found at N65, N168, and N183. A helical membrane pass occupies residues 208 to 228 (ITFCLLIGLLFTIDTVMYFSV). At 229-275 (QKGLRRSTADYEEPEVHWSKEPENKTISEEKQSFRSSRANSETPENR) the chain is on the cytoplasmic side. Positions 237-275 (ADYEEPEVHWSKEPENKTISEEKQSFRSSRANSETPENR) are disordered. Y239 carries the post-translational modification Phosphotyrosine. Basic and acidic residues predominate over residues 242-261 (PEVHWSKEPENKTISEEKQS). The span at 262 to 275 (FRSSRANSETPENR) shows a compositional bias: polar residues.

In terms of assembly, forms a heterooligomeric complex with ITAM-containing signaling subunits FCER1G. Interacts (via transmembrane domain) with signaling subunits; this interaction is a prerequisite for receptor complex expression on the cell surface and intracellular signal transduction. Binds the Fc region of antigen-complexed IgG. N-glycosylated. In terms of processing, phosphorylated following receptor ligation.

It is found in the cell membrane. Receptor for the invariable Fc fragment of immunoglobulin gamma (IgG). Binds with intermediate affinity to both IgG2a and IgG2b. Can bind to IgG2a and IgG2b monomers. Does not display binding to IgG1 or IgG3. Recognizes neutralizing virus-specific IgGs displayed on the cell surface of infected cells and triggers antibody-dependent cellular cytotoxicity (ADCC). Confers protection to lethal influenza virus infection. On splenic dendritic cells, uptakes antigen immune complexes and efficiently divert them into MHC class I and II antigen presentation pathways to provide for superior priming of CD4-positive and CD8-positive T cell immune responses. Mediates neutrophil activation by IgG complexes redundantly with FCGR2A. Plays a role in promoting bone resorption by enhancing osteoclast differentiation following binding to IgG2a. Also acts as a receptor for the Fc region of immunoglobulin epsilon (IgE). Binds with low affinity to both the a and b allotypes of IgE. Has also been shown to bind to IgE allotype a only but not to allotype b. Binds aggregated IgE but not the monomeric form and bound monomeric IgG is readily displaced by IgE complexes. Binding to IgE promotes macrophage-mediated phagocytosis, antigen presentation to T cells, production of pro-inflammatory cytokines and the late phase of cutaneous allergic reactions. Mediates enhanced ADCC in response to afucosylated IgGs. In Cricetulus griseus (Chinese hamster), this protein is Low affinity immunoglobulin gamma Fc region receptor III-A.